The following is a 598-amino-acid chain: EF-hand and coiled-coil domain-containing protein 1 (598 aa).

The interval 1 to 22 (MEPVSTGAEAGMEGAGGDPYRR) is disordered. One can recognise an EF-hand domain in the interval 54-89 (GLDQYLQEVFHHLDCRGAGRLPRADFRALCAVLGLR). Disordered stretches follow at residues 96-127 (AGQA…DTDE), 175-198 (RLRR…PDCE), and 326-411 (YRSE…KKTP). Basic residues predominate over residues 175-185 (RLRRPRRRRRP). A coiled-coil region spans residues 196–303 (DCERVARLEE…RSLHRVRELE (108 aa)). Over residues 343–359 (PGDKSNEPEDAGTRDPD) the composition is skewed to basic and acidic residues. Residues 394-404 (SDEEEVEEERW) show a composition bias toward acidic residues. Residues 479–533 (TSEEEAELQQKVEENEHLRLELQMVETERVRLSLLEEKLVDVLQLLQRLRDLNIS) adopt a coiled-coil conformation.

This is EF-hand and coiled-coil domain-containing protein 1 (EFCC1) from Homo sapiens (Human).